A 221-amino-acid polypeptide reads, in one-letter code: uncharacterized protein (221 aa).

The signal sequence occupies residues 1–30 (MAKFNNNILLIILIIVILFIIFYFLNKNNQ).

The protein resides in the virion. This is an uncharacterized protein from Acanthamoeba polyphaga mimivirus (APMV).